A 397-amino-acid polypeptide reads, in one-letter code: MIRYLTSGESHGPALSAIVEGVPAGVGITPEMINTELARRQQGYGRGGRMKIETDQAEVLSGIRFGKTIGSPITLIIRNRDWENWTTTMSQFSEPAEDIAKITIPRPGHADLTGKIKYGLNDIRPVIERSSARETTARVAAGTISRIFLKAIGIEIGSYISAIGSAGETTADTQIEKLLRSGAETLARKADRSAVRMLDKKKEAEAIIAIDAAKDAGDTLGGIIEIFITGVPMGLGSYMQHDRRLDANLAAALISIQAIKGVEIGTAFANALKPGSQVHDEFIIEPEKGLTRSSNRAGGIEGSMSSGQTIHLRAAMKPISSLLTPLHSFDSETLQPTLSRFERSDTCAVPAAGVVAEAMVSTVIANAVLEKFGGDHLGEIQTRISLHRDLTRKAFIA.

NADP(+) is bound by residues Arg-40 and Arg-46. Residues 129-131 (RSS), 257-258 (QA), Gly-302, 317-321 (KPISS), and Arg-343 each bind FMN.

This sequence belongs to the chorismate synthase family. As to quaternary structure, homotetramer. The cofactor is FMNH2.

The catalysed reaction is 5-O-(1-carboxyvinyl)-3-phosphoshikimate = chorismate + phosphate. It functions in the pathway metabolic intermediate biosynthesis; chorismate biosynthesis; chorismate from D-erythrose 4-phosphate and phosphoenolpyruvate: step 7/7. In terms of biological role, catalyzes the anti-1,4-elimination of the C-3 phosphate and the C-6 proR hydrogen from 5-enolpyruvylshikimate-3-phosphate (EPSP) to yield chorismate, which is the branch point compound that serves as the starting substrate for the three terminal pathways of aromatic amino acid biosynthesis. This reaction introduces a second double bond into the aromatic ring system. This is Chorismate synthase from Chlorobium phaeobacteroides (strain DSM 266 / SMG 266 / 2430).